The chain runs to 38 residues: Photosystem II reaction center protein L (38 aa).

A helical transmembrane segment spans residues 17–37 (SLFWGLLLIFVLAILFSSYIF).

The protein belongs to the PsbL family. As to quaternary structure, PSII is composed of 1 copy each of membrane proteins PsbA, PsbB, PsbC, PsbD, PsbE, PsbF, PsbH, PsbI, PsbJ, PsbK, PsbL, PsbM, PsbT, PsbX, PsbY, PsbZ, Psb30/Ycf12, at least 3 peripheral proteins of the oxygen-evolving complex and a large number of cofactors. It forms dimeric complexes.

It is found in the plastid. Its subcellular location is the cyanelle thylakoid membrane. One of the components of the core complex of photosystem II (PSII). PSII is a light-driven water:plastoquinone oxidoreductase that uses light energy to abstract electrons from H(2)O, generating O(2) and a proton gradient subsequently used for ATP formation. It consists of a core antenna complex that captures photons, and an electron transfer chain that converts photonic excitation into a charge separation. This subunit is found at the monomer-monomer interface and is required for correct PSII assembly and/or dimerization. In Cyanophora paradoxa, this protein is Photosystem II reaction center protein L.